The following is a 160-amino-acid chain: Transcription elongation factor GreA (160 aa).

The stretch at 53-73 (AREEQGMVEARIRDIEGRLQN) forms a coiled coil.

It belongs to the GreA/GreB family.

Its function is as follows. Necessary for efficient RNA polymerase transcription elongation past template-encoded arresting sites. The arresting sites in DNA have the property of trapping a certain fraction of elongating RNA polymerases that pass through, resulting in locked ternary complexes. Cleavage of the nascent transcript by cleavage factors such as GreA or GreB allows the resumption of elongation from the new 3'terminus. GreA releases sequences of 2 to 3 nucleotides. This chain is Transcription elongation factor GreA, found in Pseudomonas putida (strain ATCC 47054 / DSM 6125 / CFBP 8728 / NCIMB 11950 / KT2440).